A 306-amino-acid chain; its full sequence is Leucotoxin LukEv (306 aa).

A signal peptide spans 1 to 23 (MLAATLSVGLIAPLASPIQESRA).

It belongs to the aerolysin family. Toxicity requires sequential binding and synergistic association of a class S and a class F component which form heterooligomeric complexes. LukEv (class S) associates with LukDv (class F).

It is found in the secreted. Its function is as follows. Part of a bi-component leucotoxin that acts by forming pores in the membrane of the target cells. The activity of LukEv-LukDv to rabbit leukocytes is similar to that of the Panton-Valentine leucocidin (PVL). LukEv-LukDv is hemolytic to rabbit red blood cells although the activity is only 8% of gamma-hemolysin. The polypeptide is Leucotoxin LukEv (lukEv) (Staphylococcus aureus (strain NCTC 8325 / PS 47)).